A 260-amino-acid chain; its full sequence is Cytochrome c oxidase subunit 2 (260 aa).

Residues Met1–Asp41 lie on the Mitochondrial intermembrane side of the membrane. The chain crosses the membrane as a helical span at residues Ile42–Trp62. Residues His63–Thr86 are Mitochondrial matrix-facing. A helical transmembrane segment spans residues Ile87 to Met107. Over Asp108 to Ala260 the chain is Mitochondrial intermembrane. The Cu cation site is built by His187, Cys222, Glu224, Cys226, His230, and Met233. Glu224 lines the Mg(2+) pocket.

The protein belongs to the cytochrome c oxidase subunit 2 family. In terms of assembly, component of the cytochrome c oxidase (complex IV, CIV), a multisubunit enzyme composed of a catalytic core of 3 subunits and several supernumerary subunits. The complex exists as a monomer or a dimer and forms supercomplexes (SCs) in the inner mitochondrial membrane with ubiquinol-cytochrome c oxidoreductase (cytochrome b-c1 complex, complex III, CIII). Requires Cu cation as cofactor.

The protein resides in the mitochondrion inner membrane. The enzyme catalyses 4 Fe(II)-[cytochrome c] + O2 + 8 H(+)(in) = 4 Fe(III)-[cytochrome c] + 2 H2O + 4 H(+)(out). Component of the cytochrome c oxidase, the last enzyme in the mitochondrial electron transport chain which drives oxidative phosphorylation. The respiratory chain contains 3 multisubunit complexes succinate dehydrogenase (complex II, CII), ubiquinol-cytochrome c oxidoreductase (cytochrome b-c1 complex, complex III, CIII) and cytochrome c oxidase (complex IV, CIV), that cooperate to transfer electrons derived from NADH and succinate to molecular oxygen, creating an electrochemical gradient over the inner membrane that drives transmembrane transport and the ATP synthase. Cytochrome c oxidase is the component of the respiratory chain that catalyzes the reduction of oxygen to water. Electrons originating from reduced cytochrome c in the intermembrane space (IMS) are transferred via the dinuclear copper A center (CU(A)) of subunit 2 and heme A of subunit 1 to the active site in subunit 1, a binuclear center (BNC) formed by heme A3 and copper B (CU(B)). The BNC reduces molecular oxygen to 2 water molecules using 4 electrons from cytochrome c in the IMS and 4 protons from the mitochondrial matrix. The chain is Cytochrome c oxidase subunit 2 (COX2) from Arabidopsis thaliana (Mouse-ear cress).